We begin with the raw amino-acid sequence, 234 residues long: Adenosine 5'-phosphosulfate reductase (234 aa).

4 residues coordinate [4Fe-4S] cluster: Cys120, Cys121, Cys203, and Cys206. Cys229 acts as the Nucleophile; cysteine thiosulfonate intermediate in catalysis.

The protein belongs to the PAPS reductase family. CysH subfamily. The cofactor is [4Fe-4S] cluster.

The protein resides in the cytoplasm. The enzyme catalyses [thioredoxin]-disulfide + sulfite + AMP + 2 H(+) = adenosine 5'-phosphosulfate + [thioredoxin]-dithiol. It functions in the pathway sulfur metabolism; hydrogen sulfide biosynthesis; sulfite from sulfate. Its function is as follows. Catalyzes the formation of sulfite from adenosine 5'-phosphosulfate (APS) using thioredoxin as an electron donor. This Bacillus cereus (strain ATCC 14579 / DSM 31 / CCUG 7414 / JCM 2152 / NBRC 15305 / NCIMB 9373 / NCTC 2599 / NRRL B-3711) protein is Adenosine 5'-phosphosulfate reductase.